A 533-amino-acid chain; its full sequence is Subtilisin-like protease 1 (533 aa).

A signal peptide spans 1–19; it reads MGVFRFISISLAAVSAANA. A propeptide spanning residues 20 to 116 is cleaved from the precursor; sequence AQILSMPHAQ…VEPDTIISVH (97 aa). One can recognise an Inhibitor I9 domain in the interval 34 to 115; it reads SYIVMMKDDT…FVEPDTIISV (82 aa). The 275-residue stretch at 126 to 400 folds into the Peptidase S8 domain; it reads SWGLARISNP…NVLINNGGAK (275 aa). Active-site charge relay system residues include Asp158 and His190. Positions 175-198 are disordered; sequence GSNQVNDGDDRDGSGHGTHTSGTM. N-linked (GlcNAc...) asparagine glycosylation is found at Asn233 and Asn251. Positions 282–294 are enriched in polar residues; that stretch reads NDNQDAQSSSPAS. The tract at residues 282-312 is disordered; it reads NDNQDAQSSSPASEPSVCTVGSSAEDDSRSS. Ser345 serves as the catalytic Charge relay system. Over residues 378 to 394 the composition is skewed to polar residues; the sequence is TSSITDAGPGTPTNVLI. The tract at residues 378–512 is disordered; it reads TSSITDAGPG…YPGGDNFDFD (135 aa). A compositionally biased stretch (pro residues) spans 405–470; sequence NPNPAPSPSP…FPGEPFPGEP (66 aa). Residues 471-487 show a composition bias toward low complexity; sequence FPGESFPGESFPGESAP. Positions 488 to 502 are enriched in pro residues; the sequence is APAPMPPSPQHPHTP.

Belongs to the peptidase S8 family.

The protein localises to the secreted. In terms of biological role, secreted subtilisin-like serine protease with keratinolytic activity that contributes to pathogenicity. The polypeptide is Subtilisin-like protease 1 (SUB1) (Arthroderma benhamiae (strain ATCC MYA-4681 / CBS 112371) (Trichophyton mentagrophytes)).